A 409-amino-acid polypeptide reads, in one-letter code: NDP-glycosyltransferase ltbB (409 aa).

N-linked (GlcNAc...) asparagine glycosylation is present at N36. Residues I319–A339 traverse the membrane as a helical segment.

It belongs to the GT2 glycosyltransferase family.

It localises to the membrane. It functions in the pathway secondary metabolite biosynthesis. In terms of biological role, NDP-glycosyltransferase; part of the gene cluster that mediates the biosynthesis of luteodienoside A, a glycosylated polyketide consisting of an unusual 1-O-beta-D-glucopyranosyl-myo-inositol (glucinol) ester of 3-hydroxy-2,2,4-trimethylocta-4,6-dienoic acid. LtbB likely serves as a glucinol synthase by transferring D-glucose to myo-inositol using NDP-glucose as a substrate. The ltbA carnitine O-acyltransferase (cAT) domain uses glucinol produced by the glycosyltransferase ltbB as an offloading substrate to release luteodienoside A from the HR-PKS. Since ltbA and ltbB are sufficient for the biosynthesis of luteodienoside A, the functions of the methyltransferase ltbC and the FAD-binding monooxygenase ltbD within the pathway remain obscur. In Aspergillus luteorubrus, this protein is NDP-glycosyltransferase ltbB.